The sequence spans 807 residues: Probable E3 ubiquitin-protein ligase mug30 (807 aa).

The HECT domain maps to 453-807 (RNKDFRKALK…LLETNGFNIR (355 aa)). Cysteine 775 acts as the Glycyl thioester intermediate in catalysis.

The protein resides in the cytoplasm. It is found in the cytoskeleton. It localises to the microtubule organizing center. The protein localises to the spindle pole body. The catalysed reaction is S-ubiquitinyl-[E2 ubiquitin-conjugating enzyme]-L-cysteine + [acceptor protein]-L-lysine = [E2 ubiquitin-conjugating enzyme]-L-cysteine + N(6)-ubiquitinyl-[acceptor protein]-L-lysine.. The protein operates within protein modification; protein ubiquitination. Its function is as follows. Probable E3 ubiquitin-protein ligase. Has a role in meiosis. In Schizosaccharomyces pombe (strain 972 / ATCC 24843) (Fission yeast), this protein is Probable E3 ubiquitin-protein ligase mug30 (mug30).